The sequence spans 352 residues: UPF0324 membrane protein RA0957 (352 aa).

A run of 10 helical transmembrane segments spans residues 24–43 (VVSYFPGLAVAVLIAISAQF), 48–67 (YGAPATLMALLLGMSLNFLS), 104–126 (LGVSLLCLVTTALACTILFAIIV), 136–158 (LSLLTGGAVAICGASAAVALNAV), 169–191 (LALTIVAITLLSTSAMVLYPVLA), 201–223 (SGVFIGGTIHDVAQVVGAGFAMS), 235–257 (IVRVSLLAPTIIAVLIMVTVLGA), 272–294 (GFVLGFAFLAALKSMGFLPAAAG), 301–318 (SRWLLLIALGAVGLKTSV), and 328–350 (HVTLALLATAFLAAFIVVGLLWY).

This sequence belongs to the UPF0324 family.

Its subcellular location is the cell membrane. The polypeptide is UPF0324 membrane protein RA0957 (Rhizobium meliloti (strain 1021) (Ensifer meliloti)).